Consider the following 415-residue polypeptide: Diaminopimelate decarboxylase (415 aa).

Lys-60 is modified (N6-(pyridoxal phosphate)lysine). Residues Gly-239 and 274–277 (EPGR) contribute to the pyridoxal 5'-phosphate site. Substrate-binding residues include Arg-277, Arg-313, and Tyr-317. The Proton donor role is filled by Cys-344. Residues Glu-345 and Tyr-372 each coordinate substrate. Residue Tyr-372 participates in pyridoxal 5'-phosphate binding.

It belongs to the Orn/Lys/Arg decarboxylase class-II family. LysA subfamily. As to quaternary structure, homodimer. Requires pyridoxal 5'-phosphate as cofactor.

It catalyses the reaction meso-2,6-diaminopimelate + H(+) = L-lysine + CO2. It participates in amino-acid biosynthesis; L-lysine biosynthesis via DAP pathway; L-lysine from DL-2,6-diaminopimelate: step 1/1. Specifically catalyzes the decarboxylation of meso-diaminopimelate (meso-DAP) to L-lysine. This chain is Diaminopimelate decarboxylase, found in Haemophilus influenzae (strain ATCC 51907 / DSM 11121 / KW20 / Rd).